Reading from the N-terminus, the 566-residue chain is Acyl-CoA synthetase ALT10 (566 aa).

An AMP-binding site is contributed by 196–207 (MLFTSGTTGAPK). The AMP-binding stretch occupies residues 473 to 551 (EVEHAALSHE…DAVHYNRTGK (79 aa)).

The protein belongs to the ATP-dependent AMP-binding enzyme family.

Its pathway is mycotoxin biosynthesis. Its function is as follows. Acyl-CoA synthetase; part of the gene cluster that mediates the biosynthesis of the host-selective toxins (HSTs) AAL-toxins, sphinganine-analog mycotoxins responsible for Alternaria stem canker on tomato by the tomato pathotype. The biosynthesis starts with the polyketide synthase ALT1-catalyzed C-16 carbon chain assembly from one starter acetyl-CoA unit with malonyl-CoA extender units. ALT1 also selectively transfers methyl groups at the first and the third cycle of chain elongation for AAL toxin. The C-16 polyketide chain is released from the enzyme by a nucleophilic attack of a carbanion, which is derived from R-carbon of glycin by decarboxylation, on the carbonyl carbon of polyketide acyl chain. This step is probably catalyzed by a pyridoxal 5'-phosphate-dependent aminoacyl transferase ALT4. The respective functions of the other enzymes encoded by the cluster have still to be elucidated. The sphingosine N-acyltransferase-like protein ALT7 seems not to act as a resistance/self-tolerance factor against the toxin in the toxin biosynthetic gene cluster, contrary to what is expected. The polypeptide is Acyl-CoA synthetase ALT10 (Alternaria alternata (Alternaria rot fungus)).